A 62-amino-acid polypeptide reads, in one-letter code: Photosystem II reaction center protein Z (62 aa).

A run of 2 helical transmembrane segments spans residues 8-28 (TLLA…VLLA) and 41-61 (FSGS…NSFV).

Belongs to the PsbZ family. As to quaternary structure, PSII is composed of 1 copy each of membrane proteins PsbA, PsbB, PsbC, PsbD, PsbE, PsbF, PsbH, PsbI, PsbJ, PsbK, PsbL, PsbM, PsbT, PsbY, PsbZ, Psb30/Ycf12, at least 3 peripheral proteins of the oxygen-evolving complex and a large number of cofactors. It forms dimeric complexes.

It is found in the plastid. The protein resides in the chloroplast thylakoid membrane. Its function is as follows. May control the interaction of photosystem II (PSII) cores with the light-harvesting antenna, regulates electron flow through the 2 photosystem reaction centers. PSII is a light-driven water plastoquinone oxidoreductase, using light energy to abstract electrons from H(2)O, generating a proton gradient subsequently used for ATP formation. The chain is Photosystem II reaction center protein Z from Ostreococcus tauri.